The chain runs to 460 residues: Argininosuccinate lyase (460 aa).

Belongs to the lyase 1 family. Argininosuccinate lyase subfamily.

It is found in the cytoplasm. It carries out the reaction 2-(N(omega)-L-arginino)succinate = fumarate + L-arginine. The protein operates within amino-acid biosynthesis; L-arginine biosynthesis; L-arginine from L-ornithine and carbamoyl phosphate: step 3/3. This Lawsonia intracellularis (strain PHE/MN1-00) protein is Argininosuccinate lyase.